We begin with the raw amino-acid sequence, 211 residues long: Thiamine-phosphate synthase (211 aa).

4-amino-2-methyl-5-(diphosphooxymethyl)pyrimidine-binding positions include 39–43 and Asn-71; that span reads QLREK. Mg(2+)-binding residues include Asp-72 and Asp-91. Ser-110 is a binding site for 4-amino-2-methyl-5-(diphosphooxymethyl)pyrimidine. Position 136–138 (136–138) interacts with 2-[(2R,5Z)-2-carboxy-4-methylthiazol-5(2H)-ylidene]ethyl phosphate; sequence TAT. Lys-139 serves as a coordination point for 4-amino-2-methyl-5-(diphosphooxymethyl)pyrimidine. 2-[(2R,5Z)-2-carboxy-4-methylthiazol-5(2H)-ylidene]ethyl phosphate-binding positions include Ala-167 and 187–188; that span reads VS.

The protein belongs to the thiamine-phosphate synthase family. Mg(2+) serves as cofactor.

It catalyses the reaction 2-[(2R,5Z)-2-carboxy-4-methylthiazol-5(2H)-ylidene]ethyl phosphate + 4-amino-2-methyl-5-(diphosphooxymethyl)pyrimidine + 2 H(+) = thiamine phosphate + CO2 + diphosphate. The enzyme catalyses 2-(2-carboxy-4-methylthiazol-5-yl)ethyl phosphate + 4-amino-2-methyl-5-(diphosphooxymethyl)pyrimidine + 2 H(+) = thiamine phosphate + CO2 + diphosphate. The catalysed reaction is 4-methyl-5-(2-phosphooxyethyl)-thiazole + 4-amino-2-methyl-5-(diphosphooxymethyl)pyrimidine + H(+) = thiamine phosphate + diphosphate. It participates in cofactor biosynthesis; thiamine diphosphate biosynthesis; thiamine phosphate from 4-amino-2-methyl-5-diphosphomethylpyrimidine and 4-methyl-5-(2-phosphoethyl)-thiazole: step 1/1. Condenses 4-methyl-5-(beta-hydroxyethyl)thiazole monophosphate (THZ-P) and 2-methyl-4-amino-5-hydroxymethyl pyrimidine pyrophosphate (HMP-PP) to form thiamine monophosphate (TMP). The protein is Thiamine-phosphate synthase of Solidesulfovibrio magneticus (strain ATCC 700980 / DSM 13731 / RS-1) (Desulfovibrio magneticus).